The chain runs to 624 residues: Leucine-rich repeat and IQ domain-containing protein 3 (624 aa).

LRR repeat units follow at residues 51–72 (SLRV…QSCI), 73–94 (KLIK…KFWN), and 98–119 (NLKL…CVLS). Residues 132–179 (CPVSLKKGYRHVLVNSIWPLKALDHHVISDEEIIQNWHLPERFKACNH) form the LRRCT domain. Residues 215–244 (HNSPVLIVQRWIRGFLVRKNLSPVFFHKKK) enclose the IQ domain. The stretch at 553-614 (KQKLKAEKYR…TKVAIVKTNL (62 aa)) forms a coiled coil.

The sequence is that of Leucine-rich repeat and IQ domain-containing protein 3 (LRRIQ3) from Homo sapiens (Human).